A 37-amino-acid chain; its full sequence is Large ribosomal subunit protein bL36A (37 aa).

This sequence belongs to the bacterial ribosomal protein bL36 family.

The chain is Large ribosomal subunit protein bL36A from Neisseria meningitidis serogroup C (strain 053442).